Consider the following 231-residue polypeptide: Large ribosomal subunit protein uL1 (231 aa).

It belongs to the universal ribosomal protein uL1 family. In terms of assembly, part of the 50S ribosomal subunit.

Functionally, binds directly to 23S rRNA. The L1 stalk is quite mobile in the ribosome, and is involved in E site tRNA release. In terms of biological role, protein L1 is also a translational repressor protein, it controls the translation of the L11 operon by binding to its mRNA. In Mycoplasmopsis synoviae (strain 53) (Mycoplasma synoviae), this protein is Large ribosomal subunit protein uL1.